The primary structure comprises 374 residues: Chaperone protein DnaJ (374 aa).

One can recognise a J domain in the interval 4 to 68 (DYYDILGVSR…ETRARYDRFG (65 aa)). The segment at 133 to 215 (GGEKQIRITH…CGGNGQAQVT (83 aa)) adopts a CR-type zinc-finger fold. Zn(2+) is bound by residues Cys-146, Cys-149, Cys-163, Cys-166, Cys-189, Cys-192, Cys-203, and Cys-206. 4 CXXCXGXG motif repeats span residues 146–153 (CTTCNGSG), 163–170 (CGTCGGAG), 189–196 (CPTCNGKG), and 203–210 (CETCGGNG).

It belongs to the DnaJ family. Homodimer. The cofactor is Zn(2+).

The protein resides in the cytoplasm. Participates actively in the response to hyperosmotic and heat shock by preventing the aggregation of stress-denatured proteins and by disaggregating proteins, also in an autonomous, DnaK-independent fashion. Unfolded proteins bind initially to DnaJ; upon interaction with the DnaJ-bound protein, DnaK hydrolyzes its bound ATP, resulting in the formation of a stable complex. GrpE releases ADP from DnaK; ATP binding to DnaK triggers the release of the substrate protein, thus completing the reaction cycle. Several rounds of ATP-dependent interactions between DnaJ, DnaK and GrpE are required for fully efficient folding. Also involved, together with DnaK and GrpE, in the DNA replication of plasmids through activation of initiation proteins. This is Chaperone protein DnaJ from Cyanothece sp. (strain PCC 7425 / ATCC 29141).